Here is a 426-residue protein sequence, read N- to C-terminus: Histidine--tRNA ligase (426 aa).

Belongs to the class-II aminoacyl-tRNA synthetase family. Homodimer.

Its subcellular location is the cytoplasm. It carries out the reaction tRNA(His) + L-histidine + ATP = L-histidyl-tRNA(His) + AMP + diphosphate + H(+). The sequence is that of Histidine--tRNA ligase from Pseudoalteromonas atlantica (strain T6c / ATCC BAA-1087).